The chain runs to 224 residues: Urease accessory protein UreF 2 (224 aa).

Belongs to the UreF family. As to quaternary structure, ureD, UreF and UreG form a complex that acts as a GTP-hydrolysis-dependent molecular chaperone, activating the urease apoprotein by helping to assemble the nickel containing metallocenter of UreC. The UreE protein probably delivers the nickel.

It is found in the cytoplasm. In terms of biological role, required for maturation of urease via the functional incorporation of the urease nickel metallocenter. In Pseudomonas syringae pv. tomato (strain ATCC BAA-871 / DC3000), this protein is Urease accessory protein UreF 2.